Here is a 505-residue protein sequence, read N- to C-terminus: Cytochrome P450 CYP71D313 (505 aa).

The chain crosses the membrane as a helical span at residues 1–21; it reads MELQFPLFSIFFVTILFFFLF. A heme-binding site is contributed by Cys-441. A helical transmembrane segment spans residues 442 to 462; it reads PGIAFGIATIELPLALLLYHF.

This sequence belongs to the cytochrome P450 family. Heme serves as cofactor.

Its subcellular location is the membrane. Its function is as follows. Probable heme-thiolate monooxygenase. The protein is Cytochrome P450 CYP71D313 of Panax ginseng (Korean ginseng).